Reading from the N-terminus, the 365-residue chain is uncharacterized protein (365 aa).

Basic and acidic residues-rich tracts occupy residues 1–27 (MDNV…EDHS) and 315–339 (AKDD…ETPK). 2 disordered regions span residues 1–31 (MDNV…NSYQ) and 308–365 (KEEK…CLIS). The span at 340–353 (KASNTPRRNKSNTQ) shows a compositional bias: polar residues.

This sequence to yeast YGL082w. Interacts with sad1.

The protein localises to the cytoplasm. This is an uncharacterized protein from Schizosaccharomyces pombe (strain 972 / ATCC 24843) (Fission yeast).